A 280-amino-acid polypeptide reads, in one-letter code: Probable ketoamine kinase lp_1983 (280 aa).

87–89 serves as a coordination point for ATP; sequence DWL. Aspartate 189 serves as the catalytic Proton acceptor.

It belongs to the fructosamine kinase family.

It carries out the reaction N(6)-(D-ribulosyl)-L-lysine + ATP = N(6)-(3-O-phospho-D-ribulosyl)-L-lysine + ADP + H(+). It catalyses the reaction N-(D-ribulosyl)-cadaverine + ATP = N-(3-O-phospho-D-ribulosyl)-cadaverine + ADP + H(+). The enzyme catalyses N(6)-(D-erythrulosyl)-L-lysine + ATP = N(6)-(3-O-phospho-D-erythrulosyl)-L-lysine + ADP + H(+). The catalysed reaction is N-(D-erythrulosyl)-cadaverine + ATP = N-(3-O-phospho-D-erythrulosyl)-cadaverine + ADP + H(+). It carries out the reaction N(6)-D-ribulosyl-L-lysyl-[protein] + ATP = N(6)-(3-O-phospho-D-ribulosyl)-L-lysyl-[protein] + ADP + H(+). It catalyses the reaction N(6)-(D-erythrulosyl)-L-lysyl-[protein] + ATP = N(6)-(3-O-phospho-D-erythrulosyl)-L-lysyl-[protein] + ADP + H(+). In terms of biological role, ketoamine kinase that phosphorylates ketoamines, such as erythruloselysine, erythrulosecadaverine, ribuloselysine and ribulosecadaverine, on the third carbon of the sugar moiety to generate ketoamine 3-phosphate. Has higher activity on free lysine (erythruloselysine and ribuloselysine), than on ribuloselysine and erythruloselysine residues on glycated proteins. The protein is Probable ketoamine kinase lp_1983 of Lactiplantibacillus plantarum (strain ATCC BAA-793 / NCIMB 8826 / WCFS1) (Lactobacillus plantarum).